Reading from the N-terminus, the 160-residue chain is uncharacterized protein (160 aa).

It is found in the plastid. This is an uncharacterized protein from Euglena longa (Euglenophycean alga).